Here is a 154-residue protein sequence, read N- to C-terminus: Host transcription reprogramming factor 5 (154 aa).

The signal sequence occupies residues 1 to 19 (MQILRIAQLMALLATCASA). A disordered region spans residues 24-85 (TGSRVYSRDV…KRIKAEQNAR (62 aa)). Residues 35-50 (QTQGGFSGSPTTNSPD) show a composition bias toward polar residues. Residues 69–85 (ETEKERKKRIKAEQNAR) are compositionally biased toward basic and acidic residues. The C2H2-type; degenerate zinc finger occupies 96–121 (YQCPYCSDPTVFSHSDALGRHIYTIH).

It localises to the secreted. The protein resides in the host nucleus. Probable secreted effector that translocates into the nuclei of host cells to reprogram the expression of targeted genes by binding on effector binding elements in rice. The chain is Host transcription reprogramming factor 5 from Pyricularia oryzae (strain 70-15 / ATCC MYA-4617 / FGSC 8958) (Rice blast fungus).